Reading from the N-terminus, the 211-residue chain is Large ribosomal subunit protein eL13 (211 aa).

The protein belongs to the eukaryotic ribosomal protein eL13 family. Component of the 60S large ribosomal subunit (LSU).

It is found in the cytoplasm. In terms of biological role, component of the ribosome, a large ribonucleoprotein complex responsible for the synthesis of proteins in the cell. The small ribosomal subunit (SSU) binds messenger RNAs (mRNAs) and translates the encoded message by selecting cognate aminoacyl-transfer RNA (tRNA) molecules. The large subunit (LSU) contains the ribosomal catalytic site termed the peptidyl transferase center (PTC), which catalyzes the formation of peptide bonds, thereby polymerizing the amino acids delivered by tRNAs into a polypeptide chain. The nascent polypeptides leave the ribosome through a tunnel in the LSU and interact with protein factors that function in enzymatic processing, targeting, and the membrane insertion of nascent chains at the exit of the ribosomal tunnel. As part of the LSU, it is probably required for its formation and the maturation of rRNAs. This Ictalurus punctatus (Channel catfish) protein is Large ribosomal subunit protein eL13 (rpl13).